The chain runs to 314 residues: Acetylglutamate kinase (314 aa).

Substrate-binding positions include 76-77 (GG), arginine 98, and asparagine 199.

This sequence belongs to the acetylglutamate kinase family. ArgB subfamily.

It is found in the cytoplasm. The catalysed reaction is N-acetyl-L-glutamate + ATP = N-acetyl-L-glutamyl 5-phosphate + ADP. It participates in amino-acid biosynthesis; L-arginine biosynthesis; N(2)-acetyl-L-ornithine from L-glutamate: step 2/4. Its function is as follows. Catalyzes the ATP-dependent phosphorylation of N-acetyl-L-glutamate. The polypeptide is Acetylglutamate kinase (Bifidobacterium longum (strain DJO10A)).